Reading from the N-terminus, the 229-residue chain is Ribonuclease 3 (229 aa).

An RNase III domain is found at Leu-5–Asp-127. Glu-40 is a Mg(2+) binding site. Residue Asp-44 is part of the active site. 2 residues coordinate Mg(2+): Asp-113 and Glu-116. Residue Glu-116 is part of the active site. One can recognise a DRBM domain in the interval Asp-154–Val-224.

This sequence belongs to the ribonuclease III family. In terms of assembly, homodimer. Mg(2+) is required as a cofactor.

The protein localises to the cytoplasm. It catalyses the reaction Endonucleolytic cleavage to 5'-phosphomonoester.. Functionally, digests double-stranded RNA. Involved in the processing of primary rRNA transcript to yield the immediate precursors to the large and small rRNAs (23S and 16S). Processes some mRNAs, and tRNAs when they are encoded in the rRNA operon. Processes pre-crRNA and tracrRNA of type II CRISPR loci if present in the organism. This chain is Ribonuclease 3, found in Pseudomonas putida (strain GB-1).